A 388-amino-acid polypeptide reads, in one-letter code: S-adenosylmethionine synthase (388 aa).

His-16 is a binding site for ATP. Residue Asp-18 participates in Mg(2+) binding. Glu-44 is a K(+) binding site. The L-methionine site is built by Glu-57 and Gln-100. Residues 100–110 form a flexible loop region; that stretch reads QSPDIAQGVDK. ATP contacts are provided by residues 167 to 169, 233 to 234, Asp-242, 248 to 249, Ala-265, and Lys-269; these read DAK, RF, and RK. Asp-242 lines the L-methionine pocket. Position 273 (Lys-273) interacts with L-methionine.

This sequence belongs to the AdoMet synthase family. In terms of assembly, homotetramer; dimer of dimers. Requires Mg(2+) as cofactor. The cofactor is K(+).

The protein localises to the cytoplasm. The enzyme catalyses L-methionine + ATP + H2O = S-adenosyl-L-methionine + phosphate + diphosphate. The protein operates within amino-acid biosynthesis; S-adenosyl-L-methionine biosynthesis; S-adenosyl-L-methionine from L-methionine: step 1/1. In terms of biological role, catalyzes the formation of S-adenosylmethionine (AdoMet) from methionine and ATP. The overall synthetic reaction is composed of two sequential steps, AdoMet formation and the subsequent tripolyphosphate hydrolysis which occurs prior to release of AdoMet from the enzyme. This is S-adenosylmethionine synthase from Polynucleobacter necessarius subsp. necessarius (strain STIR1).